The sequence spans 331 residues: Centriolar satellite-associated tubulin polyglutamylase complex regulator 1 (331 aa).

A disordered region spans residues 283-331 (PTSNNNSSSSALGQKEMSKKASPRKSLHQRKRIEMESDGSTEETDSSEN). Over residues 303–313 (ASPRKSLHQRK) the composition is skewed to basic residues. Over residues 318–331 (ESDGSTEETDSSEN) the composition is skewed to acidic residues.

Belongs to the CSTPP1 family. In terms of assembly, interacts with PCM1. Interacts with the complex TPGC. Binds to alpha-tubulin. As to expression, expression in elevated in ciliated tissues/organs, including brain, spinal cord, kidney, eyes, ears and lateral line.

The protein resides in the cytoplasm. It localises to the cytoskeleton. It is found in the microtubule organizing center. The protein localises to the centrosome. Its subcellular location is the centriolar satellite. Its function is as follows. Regulator of the tubulin polyglutamylase complex (TPGC) that controls cytoskeletal organization, nuclear shape, and cilium disassembly by balancing microtubule and actin assembly. Regulates the assembly and stability of the TPGC and thereby modulates polyglutamylation of the microtubule, which antagonizes MAP4 binding. The chain is Centriolar satellite-associated tubulin polyglutamylase complex regulator 1 (cstpp1) from Danio rerio (Zebrafish).